The sequence spans 133 residues: Small ribosomal subunit protein uS19 (133 aa).

The protein belongs to the universal ribosomal protein uS19 family.

Protein S19 forms a complex with S13 that binds strongly to the 16S ribosomal RNA. In Thermococcus gammatolerans (strain DSM 15229 / JCM 11827 / EJ3), this protein is Small ribosomal subunit protein uS19.